The chain runs to 102 residues: Small ribosomal subunit protein eS24 (102 aa).

This sequence belongs to the eukaryotic ribosomal protein eS24 family.

The polypeptide is Small ribosomal subunit protein eS24 (Methanococcus maripaludis (strain C7 / ATCC BAA-1331)).